The following is a 596-amino-acid chain: Arginine--tRNA ligase (596 aa).

The short motif at 128–138 (ANPTSSLHVGH) is the 'HIGH' region element.

The protein belongs to the class-I aminoacyl-tRNA synthetase family. Monomer.

The protein localises to the cytoplasm. It catalyses the reaction tRNA(Arg) + L-arginine + ATP = L-arginyl-tRNA(Arg) + AMP + diphosphate. The chain is Arginine--tRNA ligase from Acinetobacter baumannii (strain AB307-0294).